The primary structure comprises 207 residues: Cytochrome c oxidase subunit 3 (207 aa).

The next 5 helical transmembrane spans lie at 28-48 (FLGFWLFLGGETVLFASLFAT), 70-90 (VVFMATMLLLTSSLTSVYAIY), 102-122 (LWFGITVLLGAGFLGLEIYEF), 144-164 (LVGTHGSHVAFGLLWILTLMI), and 186-206 (WHFIDVVWVFIFTVVYLMGMV).

This sequence belongs to the cytochrome c oxidase subunit 3 family.

It localises to the cell membrane. It catalyses the reaction 4 Fe(II)-[cytochrome c] + O2 + 8 H(+)(in) = 4 Fe(III)-[cytochrome c] + 2 H2O + 4 H(+)(out). This is Cytochrome c oxidase subunit 3 (ctaE) from Bacillus sp. (strain PS3).